A 369-amino-acid polypeptide reads, in one-letter code: 3',5'-cyclic-nucleotide phosphodiesterase 1 (369 aa).

The protein belongs to the cyclic nucleotide phosphodiesterase class-II family.

It catalyses the reaction a nucleoside 3',5'-cyclic phosphate + H2O = a nucleoside 5'-phosphate + H(+). Functionally, controls the level of cAMP in yeast cells, together with the high-affinity cAMP phosphodiesterase (PDE2). This is 3',5'-cyclic-nucleotide phosphodiesterase 1 (PDE1) from Saccharomyces cerevisiae (strain ATCC 204508 / S288c) (Baker's yeast).